A 369-amino-acid polypeptide reads, in one-letter code: Anhydro-N-acetylmuramic acid kinase (369 aa).

12 to 19 (GTSLDGVD) contributes to the ATP binding site.

The protein belongs to the anhydro-N-acetylmuramic acid kinase family.

The catalysed reaction is 1,6-anhydro-N-acetyl-beta-muramate + ATP + H2O = N-acetyl-D-muramate 6-phosphate + ADP + H(+). It participates in amino-sugar metabolism; 1,6-anhydro-N-acetylmuramate degradation. It functions in the pathway cell wall biogenesis; peptidoglycan recycling. Catalyzes the specific phosphorylation of 1,6-anhydro-N-acetylmuramic acid (anhMurNAc) with the simultaneous cleavage of the 1,6-anhydro ring, generating MurNAc-6-P. Is required for the utilization of anhMurNAc either imported from the medium or derived from its own cell wall murein, and thus plays a role in cell wall recycling. This is Anhydro-N-acetylmuramic acid kinase from Actinobacillus pleuropneumoniae serotype 5b (strain L20).